Here is a 348-residue protein sequence, read N- to C-terminus: Acetylesterase (348 aa).

An N-terminal signal peptide occupies residues 1–16; sequence MRSILVIPSFVAVLNA. N-linked (GlcNAc...) asparagine glycans are attached at residues N64, N165, N218, N223, and N297.

It belongs to the carbohydrate esterase CE16 family. Post-translationally, N-glycosylated.

The protein localises to the secreted. It catalyses the reaction an acetyl ester + H2O = an aliphatic alcohol + acetate + H(+). In terms of biological role, acetylesterase that acts as an exo-deacetylase. Shows activity towards naphtyl acetate, triacetin, as well as towards glucose- and xylose acetates. Liberates acetic acid from xylo-oligomers. The protein is Acetylesterase of Hypocrea jecorina (Trichoderma reesei).